The following is a 320-amino-acid chain: o-succinylbenzoate synthase (320 aa).

Lysine 133 functions as the Proton donor in the catalytic mechanism. The Mg(2+) site is built by aspartate 161, glutamate 190, and aspartate 213. Lysine 235 acts as the Proton acceptor in catalysis.

Belongs to the mandelate racemase/muconate lactonizing enzyme family. MenC type 1 subfamily. A divalent metal cation serves as cofactor.

It carries out the reaction (1R,6R)-6-hydroxy-2-succinyl-cyclohexa-2,4-diene-1-carboxylate = 2-succinylbenzoate + H2O. It functions in the pathway quinol/quinone metabolism; 1,4-dihydroxy-2-naphthoate biosynthesis; 1,4-dihydroxy-2-naphthoate from chorismate: step 4/7. The protein operates within quinol/quinone metabolism; menaquinone biosynthesis. In terms of biological role, converts 2-succinyl-6-hydroxy-2,4-cyclohexadiene-1-carboxylate (SHCHC) to 2-succinylbenzoate (OSB). The protein is o-succinylbenzoate synthase of Salmonella typhi.